Here is a 223-residue protein sequence, read N- to C-terminus: Putative germin-like protein 2-2 (223 aa).

The signal sequence occupies residues 1–28; the sequence is MAAVGACFLQQLAVVALLALWCSHGAIA. Residues Cys-38 and Cys-53 are joined by a disulfide bond. A Cupin type-1 domain is found at 67–217; the sequence is SGLHMAGNTT…AFQVDKNIID (151 aa). 2 N-linked (GlcNAc...) asparagine glycosylation sites follow: Asn-74 and Asn-82. Mn(2+) contacts are provided by His-115, His-117, Glu-122, and His-163. Residue Asn-168 is glycosylated (N-linked (GlcNAc...) asparagine).

Belongs to the germin family. In terms of assembly, oligomer (believed to be a pentamer but probably hexamer).

The protein localises to the secreted. The protein resides in the extracellular space. It localises to the apoplast. Its function is as follows. May play a role in plant defense. Probably has no oxalate oxidase activity even if the active site is conserved. This chain is Putative germin-like protein 2-2, found in Oryza sativa subsp. japonica (Rice).